The sequence spans 296 residues: MSEKKIDLVIVTGMSGAGKTVAIQSFEDLGYFTIDNMPPALVPKFLELVESSGENDKVALVVDMRSRLFFKEVSSILDKIDLNETINFRILFLDATDSELVSRYKETRRSHPLATTGRVLDGIALERELLAPLKNLSQNVVDTTDLTPRQLRKTISDQFSVEKSQTSFRLEVVSFGFKYGLPLDADLVFDVRFLPNPYYKPELRDKTGLDKDVSDYVMQHQESEEFYQHLLALLAPILPGYQKEGKSVLTIAIGCTGGQHRSVAFAHRLAQDLGQNWTVNESHRDKNRRKETVNRS.

Residue 13–20 (GMSGAGKT) participates in ATP binding. Position 63–66 (63–66 (DMRS)) interacts with GTP.

Belongs to the RapZ-like family.

Functionally, displays ATPase and GTPase activities. In Streptococcus mutans serotype c (strain ATCC 700610 / UA159), this protein is Nucleotide-binding protein SMU_1306c.